The following is a 101-amino-acid chain: Small ribosomal subunit protein uS14 (101 aa).

The protein belongs to the universal ribosomal protein uS14 family. As to quaternary structure, part of the 30S ribosomal subunit. Contacts proteins S3 and S10.

In terms of biological role, binds 16S rRNA, required for the assembly of 30S particles and may also be responsible for determining the conformation of the 16S rRNA at the A site. The sequence is that of Small ribosomal subunit protein uS14 from Xylella fastidiosa (strain M23).